Reading from the N-terminus, the 433-residue chain is Protoheme IX farnesyltransferase 2 (433 aa).

The tract at residues 1–164 (MQRFTGLVTA…LTKPRLMWLL (164 aa)) is unknown. The next 13 helical transmembrane spans lie at 4–24 (FTGL…LGVA), 35–55 (AVAH…AAAL), 67–87 (WGVT…MAVL), 95–115 (LHLF…TWHL), 160–180 (LMWL…VTGA), 184–204 (GVTI…AGTF), 236–256 (AFGV…VNPL), 257–277 (AAAL…VVLK), 282–304 (WNTV…AVAG), 308–330 (LPAL…NLAI), 357–377 (ILYW…VAGF), 378–398 (GPVY…TVVV), and 413–433 (HASN…TMVI). The interval 165-430 (CLLALSGMAL…ALLVAILVET (266 aa)) is protoheme IX prenyltransferase.

In the C-terminal section; belongs to the UbiA prenyltransferase family. Protoheme IX farnesyltransferase subfamily.

It localises to the cell membrane. The catalysed reaction is heme b + (2E,6E)-farnesyl diphosphate + H2O = Fe(II)-heme o + diphosphate. Its pathway is porphyrin-containing compound metabolism; heme O biosynthesis; heme O from protoheme: step 1/1. In terms of biological role, converts heme B (protoheme IX) to heme O by substitution of the vinyl group on carbon 2 of heme B porphyrin ring with a hydroxyethyl farnesyl side group. The protein is Protoheme IX farnesyltransferase 2 (ctaB2) of Natronomonas pharaonis (strain ATCC 35678 / DSM 2160 / CIP 103997 / JCM 8858 / NBRC 14720 / NCIMB 2260 / Gabara) (Halobacterium pharaonis).